Consider the following 262-residue polypeptide: Phosphonates import ATP-binding protein PhnC 3 (262 aa).

Positions 3 to 245 constitute an ABC transporter domain; it reads IQLECLSVTY…ELNRIYGNAE (243 aa). Residue 36 to 43 participates in ATP binding; that stretch reads GASGSGKS.

Belongs to the ABC transporter superfamily. Phosphonates importer (TC 3.A.1.9.1) family. In terms of assembly, the complex is composed of two ATP-binding proteins (PhnC), two transmembrane proteins (PhnE) and a solute-binding protein (PhnD).

The protein resides in the cell inner membrane. The enzyme catalyses phosphonate(out) + ATP + H2O = phosphonate(in) + ADP + phosphate + H(+). In terms of biological role, part of the ABC transporter complex PhnCDE involved in phosphonates import. Responsible for energy coupling to the transport system. The protein is Phosphonates import ATP-binding protein PhnC 3 of Nostoc sp. (strain PCC 7120 / SAG 25.82 / UTEX 2576).